The chain runs to 483 residues: Phosphoenolpyruvate carboxylase (483 aa).

The disordered stretch occupies residues 1-20 (MKVPRCMSTQHPDNVNPPFF).

Belongs to the PEPCase type 2 family. In terms of assembly, homotetramer. Requires Mg(2+) as cofactor.

It catalyses the reaction oxaloacetate + phosphate = phosphoenolpyruvate + hydrogencarbonate. Its activity is regulated as follows. Inhibited by NaCl, KCl, ATP, ADP, GTP and aspartate. Unlike E.coli, not regulated by acetyl-CoA. In terms of biological role, catalyzes the irreversible beta-carboxylation of phosphoenolpyruvate (PEP) to form oxaloacetate (OAA), a four-carbon dicarboxylic acid source for the tricarboxylic acid cycle. In Methanothermobacter thermautotrophicus (strain ATCC 29096 / DSM 1053 / JCM 10044 / NBRC 100330 / Delta H) (Methanobacterium thermoautotrophicum), this protein is Phosphoenolpyruvate carboxylase (ppcA).